Reading from the N-terminus, the 310-residue chain is UDP-N-acetylenolpyruvoylglucosamine reductase (310 aa).

In terms of domain architecture, FAD-binding PCMH-type spans 31 to 216; that stretch reads KIGGPADYFV…LRKIEELNQA (186 aa). The active site involves R180. The active-site Proton donor is S230. The active site involves E300.

Belongs to the MurB family. The cofactor is FAD.

It is found in the cytoplasm. It carries out the reaction UDP-N-acetyl-alpha-D-muramate + NADP(+) = UDP-N-acetyl-3-O-(1-carboxyvinyl)-alpha-D-glucosamine + NADPH + H(+). Its pathway is cell wall biogenesis; peptidoglycan biosynthesis. Its function is as follows. Cell wall formation. The sequence is that of UDP-N-acetylenolpyruvoylglucosamine reductase from Lachnoclostridium phytofermentans (strain ATCC 700394 / DSM 18823 / ISDg) (Clostridium phytofermentans).